A 143-amino-acid chain; its full sequence is Transcriptional regulator MraZ (143 aa).

SpoVT-AbrB domains lie at Glu5–Val47 and Ala76–Arg119.

Belongs to the MraZ family. Forms oligomers.

Its subcellular location is the cytoplasm. It is found in the nucleoid. The chain is Transcriptional regulator MraZ from Roseiflexus sp. (strain RS-1).